Reading from the N-terminus, the 276-residue chain is MGLAGTKIKQRFGNDPRNTNWSNDTSRFGHQYLAKMGWQQGSGLGLVSHALTTHVKVSIKDDNLGLGAKLHKRKANGDGGLEEEGTAGLDAFQRILGRLNGKENVVNKVLDNVRDDDIINGKWGMRFVKGETLSSTWDKESKKLISYKNIEDDGKKSRKRKADESETKEDKKTLKKHKKEKKDKKEKKEKKKKKEKKDKKDKKDKKNKKDKKDKKDKKDKKDKIRTGSDETLVSKESSATPPPIATRLSARSKWIKQKRASVMDSKALNEIFMITN.

The segment at 1-23 is disordered; sequence MGLAGTKIKQRFGNDPRNTNWSN. One can recognise a G-patch domain in the interval 25–71; the sequence is TSRFGHQYLAKMGWQQGSGLGLVSHALTTHVKVSIKDDNLGLGAKLH. The span at 152–172 shows a compositional bias: basic and acidic residues; it reads DDGKKSRKRKADESETKEDKK. The interval 152–261 is disordered; it reads DDGKKSRKRK…SKWIKQKRAS (110 aa). Basic residues predominate over residues 173 to 218; that stretch reads TLKKHKKEKKDKKEKKEKKKKKEKKDKKDKKDKKNKKDKKDKKDKK. Basic and acidic residues predominate over residues 219 to 228; the sequence is DKKDKIRTGS. Polar residues predominate over residues 229–239; sequence DETLVSKESSA.

The protein belongs to the PINX1 family.

It localises to the nucleus. The protein localises to the nucleolus. In terms of biological role, involved in rRNA-processing at A0, A1 and A2 sites and negatively regulates telomerase. This chain is Protein PXR1 (PXR1), found in Candida albicans (strain SC5314 / ATCC MYA-2876) (Yeast).